Here is a 75-residue protein sequence, read N- to C-terminus: Cruzioseptin-7 (75 aa).

The N-terminal stretch at 1 to 22 is a signal peptide; it reads MAKLKKSLFLVLFLGLVSLSIC. The propeptide occupies 23–43; the sequence is EEEKREEENEEVQEDDDQSEE. The interval 25 to 44 is disordered; sequence EKREEENEEVQEDDDQSEEK. The segment covering 30–41 has biased composition (acidic residues); that stretch reads ENEEVQEDDDQS.

As to expression, expressed by the skin glands.

It is found in the secreted. Its function is as follows. Has antimicrobial activity. The protein is Cruzioseptin-7 of Cruziohyla calcarifer (Splendid leaf frog).